Consider the following 230-residue polypeptide: Phosducin-like protein 1 (230 aa).

Methionine 1 is subject to N-acetylmethionine. Residues 16–166 (AEKDKHTTVD…VVGYKNGLEK (151 aa)) form the Phosducin domain. Residues 25–79 (DSDDKSSGEENLDELLNELDRELDEDHEFLSAYRSERLQQISDHLKQVKKNVEDD) adopt a coiled-coil conformation. Residues 81 to 230 (YGRLQCIDNE…RSESDSDLDI (150 aa)) form a thioredoxin fold region.

Belongs to the phosducin family. Interacts with the G protein beta-gamma subunit complex (STE4-STE18 complex).

It localises to the cytoplasm. Not essential for growth. Inhibits early G-protein signaling events following pheromone stimulation. May help create heterodimerizable beta-tubulin by facilitating the efficient transfer of nascent beta-tubulin polypeptides to the folding apparatus. The polypeptide is Phosducin-like protein 1 (PLP1) (Saccharomyces cerevisiae (strain ATCC 204508 / S288c) (Baker's yeast)).